The chain runs to 631 residues: Biotin--protein ligase (631 aa).

One can recognise a BPL/LPL catalytic domain in the interval 341-553 (ELYAKLINGC…QFDRYHRLLL (213 aa)).

It belongs to the biotin--protein ligase family. In terms of assembly, monomer.

It localises to the cytoplasm. The catalysed reaction is apo-[methylmalonyl-CoA:pyruvate carboxytransferase] + biotin + ATP = holo-[methylmalonyl-CoA:pyruvate carboxytransferase] + AMP + diphosphate + H(+). It catalyses the reaction apo-[propionyl-CoA:carbon-dioxide ligase (ADP-forming)] + biotin + ATP = holo-[propionyl-CoA:carbon-dioxide ligase (ADP-forming)] + AMP + diphosphate + H(+). The enzyme catalyses apo-[3-methylcrotonoyl-CoA:carbon-dioxide ligase (ADP-forming)] + biotin + ATP = holo-[3-methylcrotonoyl-CoA:carbon-dioxide ligase (ADP-forming)] + AMP + diphosphate + H(+). It carries out the reaction biotin + L-lysyl-[protein] + ATP = N(6)-biotinyl-L-lysyl-[protein] + AMP + diphosphate + H(+). Functionally, post-translational modification of specific protein by attachment of biotin. Acts on various carboxylases such as acetyl-CoA-carboxylase, pyruvate carboxylase, propionyl CoA carboxylase, and 3-methylcrotonyl CoA carboxylase. The sequence is that of Biotin--protein ligase (bpl1) from Schizosaccharomyces pombe (strain 972 / ATCC 24843) (Fission yeast).